The chain runs to 584 residues: Arginine--tRNA ligase (584 aa).

The 'HIGH' region signature appears at 126-136 (PNIAKEMHVGH).

The protein belongs to the class-I aminoacyl-tRNA synthetase family. As to quaternary structure, monomer.

It is found in the cytoplasm. It carries out the reaction tRNA(Arg) + L-arginine + ATP = L-arginyl-tRNA(Arg) + AMP + diphosphate. This chain is Arginine--tRNA ligase, found in Nostoc punctiforme (strain ATCC 29133 / PCC 73102).